The primary structure comprises 72 residues: Conotoxin VnMKLT2-0221 (72 aa).

A signal peptide spans 1-22 (MKLTCVLIVAVLFLTACQLTTA). The propeptide occupies 23–45 (ASYARSERQHPDLGSSDQNSKLT). Positions 26–45 (ARSERQHPDLGSSDQNSKLT) are disordered. 3 disulfides stabilise this stretch: Cys-48/Cys-62, Cys-55/Cys-66, and Cys-61/Cys-71.

The protein belongs to the conotoxin O1 superfamily. Expressed by the venom duct.

Its subcellular location is the secreted. This chain is Conotoxin VnMKLT2-0221, found in Conus ventricosus (Mediterranean cone).